The sequence spans 375 residues: Platelet-derived growth factor receptor-like protein (375 aa).

The signal sequence occupies residues 1-17 (MKVWLLLGLLLLHEALG). Positions 19–63 (VAGQHPPKNKRPKEQGENRIKPTNKKAKPKIPKIKDRDTADSAPK) are disordered. Basic residues predominate over residues 40–50 (PTNKKAKPKIP). One can recognise an Ig-like C2-type 1 domain in the interval 62–159 (PKSQSIMMQA…GYICRRDEAR (98 aa)). C96 and C143 are oxidised to a cystine. Residue N219 is glycosylated (N-linked (GlcNAc...) asparagine). An Ig-like C2-type 2 domain is found at 272–375 (PSTTILASSN…TTVATTVEFS (104 aa)). The cysteines at positions 293 and 357 are disulfide-linked.

In terms of assembly, forms a complex composed of PDGFRL, TNK2 and GRB2.

Its subcellular location is the secreted. This is Platelet-derived growth factor receptor-like protein (Pdgfrl) from Rattus norvegicus (Rat).